A 126-amino-acid chain; its full sequence is Aspartate 1-decarboxylase (126 aa).

Residue Ser25 is the Schiff-base intermediate with substrate; via pyruvic acid of the active site. At Ser25 the chain carries Pyruvic acid (Ser). Thr57 provides a ligand contact to substrate. Tyr58 serves as the catalytic Proton donor. 73–75 is a substrate binding site; it reads GAA.

The protein belongs to the PanD family. Heterooctamer of four alpha and four beta subunits. The cofactor is pyruvate. In terms of processing, is synthesized initially as an inactive proenzyme, which is activated by self-cleavage at a specific serine bond to produce a beta-subunit with a hydroxyl group at its C-terminus and an alpha-subunit with a pyruvoyl group at its N-terminus.

The protein localises to the cytoplasm. The enzyme catalyses L-aspartate + H(+) = beta-alanine + CO2. The protein operates within cofactor biosynthesis; (R)-pantothenate biosynthesis; beta-alanine from L-aspartate: step 1/1. In terms of biological role, catalyzes the pyruvoyl-dependent decarboxylation of aspartate to produce beta-alanine. This chain is Aspartate 1-decarboxylase, found in Halorhodospira halophila (strain DSM 244 / SL1) (Ectothiorhodospira halophila (strain DSM 244 / SL1)).